Reading from the N-terminus, the 274-residue chain is Large ribosomal subunit protein uL2 (274 aa).

Positions 223-258 (VAMNPVDHPHGGGEGRTSGGRHPVTPWGIPTKGYKT) are disordered.

This sequence belongs to the universal ribosomal protein uL2 family. As to quaternary structure, part of the 50S ribosomal subunit. Forms a bridge to the 30S subunit in the 70S ribosome.

One of the primary rRNA binding proteins. Required for association of the 30S and 50S subunits to form the 70S ribosome, for tRNA binding and peptide bond formation. It has been suggested to have peptidyltransferase activity; this is somewhat controversial. Makes several contacts with the 16S rRNA in the 70S ribosome. In Pelobacter propionicus (strain DSM 2379 / NBRC 103807 / OttBd1), this protein is Large ribosomal subunit protein uL2.